The following is a 336-amino-acid chain: DNA-directed RNA polymerase subunit alpha (336 aa).

The alpha N-terminal domain (alpha-NTD) stretch occupies residues 1–232 (MIQKNWQELI…DQLSVFVNFD (232 aa)). The segment at 248–336 (FNPALLKKVD…DLAKRYEDQY (89 aa)) is alpha C-terminal domain (alpha-CTD).

This sequence belongs to the RNA polymerase alpha chain family. In terms of assembly, homodimer. The RNAP catalytic core consists of 2 alpha, 1 beta, 1 beta' and 1 omega subunit. When a sigma factor is associated with the core the holoenzyme is formed, which can initiate transcription.

It catalyses the reaction RNA(n) + a ribonucleoside 5'-triphosphate = RNA(n+1) + diphosphate. DNA-dependent RNA polymerase catalyzes the transcription of DNA into RNA using the four ribonucleoside triphosphates as substrates. The sequence is that of DNA-directed RNA polymerase subunit alpha from Sinorhizobium medicae (strain WSM419) (Ensifer medicae).